We begin with the raw amino-acid sequence, 249 residues long: 1-(5-phosphoribosyl)-5-[(5-phosphoribosylamino)methylideneamino] imidazole-4-carboxamide isomerase (249 aa).

Aspartate 8 functions as the Proton acceptor in the catalytic mechanism. Aspartate 129 (proton donor) is an active-site residue.

The protein belongs to the HisA/HisF family.

The protein localises to the cytoplasm. The enzyme catalyses 1-(5-phospho-beta-D-ribosyl)-5-[(5-phospho-beta-D-ribosylamino)methylideneamino]imidazole-4-carboxamide = 5-[(5-phospho-1-deoxy-D-ribulos-1-ylimino)methylamino]-1-(5-phospho-beta-D-ribosyl)imidazole-4-carboxamide. It functions in the pathway amino-acid biosynthesis; L-histidine biosynthesis; L-histidine from 5-phospho-alpha-D-ribose 1-diphosphate: step 4/9. This is 1-(5-phosphoribosyl)-5-[(5-phosphoribosylamino)methylideneamino] imidazole-4-carboxamide isomerase from Nitratidesulfovibrio vulgaris (strain ATCC 29579 / DSM 644 / CCUG 34227 / NCIMB 8303 / VKM B-1760 / Hildenborough) (Desulfovibrio vulgaris).